The chain runs to 137 residues: Large ribosomal subunit protein uL16 (137 aa).

Belongs to the universal ribosomal protein uL16 family. As to quaternary structure, part of the 50S ribosomal subunit.

In terms of biological role, binds 23S rRNA and is also seen to make contacts with the A and possibly P site tRNAs. This Wolbachia pipientis wMel protein is Large ribosomal subunit protein uL16.